The sequence spans 440 residues: Oligodendrocyte-myelin glycoprotein (440 aa).

The signal sequence occupies residues 1-24 (MEYQILKMSSCLFILLFLTPGILC). The region spanning 25–55 (ICPLQCTCTERHRHVDCSGRNLTTLPPGLQE) is the LRRNT domain. N-linked (GlcNAc...) asparagine glycans are attached at residues Asn-45 and Asn-61. 8 LRR repeats span residues 56–78 (NIIH…TPYT), 79–100 (NLRT…LPRS), 101–121 (LWNM…DTAY), 124–145 (NLKY…KNTL), 147–168 (SLEV…MPSK), 169–189 (LHIV…TLIN), 192–213 (NLTH…SFDQ), and 216–239 (QLQE…TYLL). Asn-103 carries an N-linked (GlcNAc...) asparagine glycan. N-linked (GlcNAc...) asparagine glycans are attached at residues Asn-152, Asn-176, Asn-189, Asn-192, and Asn-234. Ser/Thr-rich repeat units follow at residues 229–270 (CDHK…YPTP), 271–292 (PGFT…INSL), 293–335 (SMVT…VAYP), 336–377 (EDTP…PPSP), and 378–416 (VTLS…TRPP). N-linked (GlcNAc...) asparagine glycosylation is found at Asn-364 and Asn-389. Ser-417 is lipidated: GPI-anchor amidated serine. Residues 418-440 (AASAWKVNASLLLMLNAVVMLAG) constitute a propeptide, removed in mature form. Asn-425 carries an N-linked (GlcNAc...) asparagine glycan.

Binds to RTN4R. O-glycosylated in its Ser/Thr-rich repeat domain. Oligodendrocytes and myelin of the central nervous system.

The protein localises to the cell membrane. Cell adhesion molecule contributing to the interactive process required for myelination in the central nervous system. The protein is Oligodendrocyte-myelin glycoprotein (Omg) of Mus musculus (Mouse).